A 258-amino-acid polypeptide reads, in one-letter code: SMH class II histocompatibility antigen, beta-1 chain (258 aa).

Residues 1–29 form the signal peptide; that stretch reads MMVLPVPVAPWTAALTVLLMVLNKSVVQG. The beta-1 stretch occupies residues 30–121; it reads RTTPENYLFR…LNQRLSQSLI (92 aa). Residues 30 to 225 are Extracellular-facing; that stretch reads RTTPENYLFR…RAQSDSARNK (196 aa). Intrachain disulfides connect Cys44–Cys106 and Cys144–Cys200. Residues 122 to 215 form a beta-2 region; that stretch reads AQPKVHVSPS…SLDRPITVEW (94 aa). An Ig-like C1-type domain is found at 124-212; it reads PKVHVSPSKG…EHPSLDRPIT (89 aa). A connecting peptide region spans residues 216-225; sequence RAQSDSARNK. N-linked (GlcNAc...) asparagine glycosylation is present at Asn224. The helical transmembrane segment at 226 to 246 threads the bilayer; the sequence is TLTGVGGLVLGLIFLAVGLIM. The Cytoplasmic portion of the chain corresponds to 247-258; that stretch reads HVRSKKAQRGSR.

It belongs to the MHC class II family.

Its subcellular location is the membrane. This chain is SMH class II histocompatibility antigen, beta-1 chain, found in Spalax ehrenbergi (Middle East blind mole rat).